A 157-amino-acid polypeptide reads, in one-letter code: Transcriptional repressor NrdR (157 aa).

The interval 1–22 is disordered; it reads MKCPYCSSPDSRVINSRPSDDG. Residues 3-34 fold into a zinc finger; that stretch reads CPYCSSPDSRVINSRPSDDGASIRRRRECLTC. A compositionally biased stretch (polar residues) spans 8–17; that stretch reads SPDSRVINSR. The ATP-cone domain occupies 49–136; the sequence is LMVVKRSGVR…VYRDFDSLER (88 aa).

It belongs to the NrdR family. Zn(2+) is required as a cofactor.

Negatively regulates transcription of bacterial ribonucleotide reductase nrd genes and operons by binding to NrdR-boxes. In Deinococcus radiodurans (strain ATCC 13939 / DSM 20539 / JCM 16871 / CCUG 27074 / LMG 4051 / NBRC 15346 / NCIMB 9279 / VKM B-1422 / R1), this protein is Transcriptional repressor NrdR.